The primary structure comprises 609 residues: Glutamine--fructose-6-phosphate aminotransferase [isomerizing] (609 aa).

Residue cysteine 2 is the Nucleophile; for GATase activity of the active site. A Glutamine amidotransferase type-2 domain is found at 2–218 (CGIVGAIAQR…EGDIAEITRR (217 aa)). SIS domains are found at residues 286-426 (ADEL…LKGL) and 458-599 (LAED…VDQP). Residue lysine 604 is the For Fru-6P isomerization activity of the active site.

Homodimer.

The protein resides in the cytoplasm. It carries out the reaction D-fructose 6-phosphate + L-glutamine = D-glucosamine 6-phosphate + L-glutamate. In terms of biological role, catalyzes the first step in hexosamine metabolism, converting fructose-6P into glucosamine-6P using glutamine as a nitrogen source. This is Glutamine--fructose-6-phosphate aminotransferase [isomerizing] from Shigella flexneri.